The primary structure comprises 1268 residues: SR-related and CTD-associated factor 8 (1268 aa).

A CID domain is found at 1-139 (MEAVKTFNSE…PLLDMAAGIP (139 aa)). At Thr6 the chain carries Phosphothreonine. Residue Lys18 forms a Glycyl lysine isopeptide (Lys-Gly) (interchain with G-Cter in SUMO1) linkage. A Phosphoserine modification is found at Ser273. Disordered regions lie at residues 322 to 355 (QQQP…QQHF) and 385 to 469 (EIFE…PVRS). Positions 342–354 (HSASPSQGSSQQH) are enriched in polar residues. Residues 394-443 (VAVRSRSRTHSRSRSRSPRKRRSRSRSGSRKRKHRKRSRSRSRERKRKSS) are compositionally biased toward basic residues. Positions 447-461 (SSERRAREREKERQK) are enriched in basic and acidic residues. The 75-residue stretch at 477–551 (TTLWVGQVDK…KVIKIAWALN (75 aa)) folds into the RRM domain. Thr615 carries the post-translational modification Phosphothreonine. At Ser617 the chain carries Phosphoserine. A disordered region spans residues 753–808 (AGNVFNPPSKAEPEEKVPHLTEHQIPSGENTRPVIPSDIPSSAPMLAQPPGASNTS). The span at 763-774 (AEPEEKVPHLTE) shows a compositional bias: basic and acidic residues. An asymmetric dimethylarginine mark is found at Arg915, Arg925, and Arg936. Positions 947–1063 (QRGIPPPSVL…GRDHFGRPPV (117 aa)) are disordered. The segment covering 961 to 970 (HPPPRGPFPP) has biased composition (pro residues). 2 stretches are compositionally biased toward basic and acidic residues: residues 1009–1025 (EGDR…REGI) and 1032–1063 (DVRD…RPPV). Residue Arg1071 is modified to Asymmetric dimethylarginine. A disordered region spans residues 1199-1268 (ATSQRKGENV…VVESTETEGT (70 aa)). Over residues 1249-1262 (GTAAGVESEAVVES) the composition is skewed to low complexity.

Interacts with POLR2A; via C-terminal heptapeptide repeat domain (CTD) phosphorylated at 'Ser-2' and 'Ser-5'. Identified in a complex with CDC5L and other spliceosomal proteins.

The protein localises to the nucleus. It localises to the nucleus matrix. In terms of biological role, anti-terminator protein required to prevent early mRNA termination during transcription. Together with SCAF4, acts by suppressing the use of early, alternative poly(A) sites, thereby preventing the accumulation of non-functional truncated proteins. Mechanistically, associates with the phosphorylated C-terminal heptapeptide repeat domain (CTD) of the largest RNA polymerase II subunit (POLR2A), and subsequently binds nascent RNA upstream of early polyadenylation sites to prevent premature mRNA transcript cleavage and polyadenylation. Independently of SCAF4, also acts as a positive regulator of transcript elongation. This chain is SR-related and CTD-associated factor 8, found in Rattus norvegicus (Rat).